A 243-amino-acid polypeptide reads, in one-letter code: Homeobox protein goosecoid isoform A (243 aa).

A DNA-binding region (homeobox) is located at residues 148–207; it reads KRRHRTIFTDEQLEALENLFQETKYPDVGTREQLARRVHLREEKVEVWFKNRRAKWRRQK. Positions 201-243 are disordered; the sequence is AKWRRQKRSSSEESENAQKWNKSSKNSAEKADEQVKSDLDSDS. A compositionally biased stretch (polar residues) spans 217-226; the sequence is AQKWNKSSKN. Residues 227–243 show a composition bias toward basic and acidic residues; it reads SAEKADEQVKSDLDSDS.

The protein belongs to the paired homeobox family. Bicoid subfamily. As to expression, at the start of gastrulation, it is found in a patch of cells encompassing 60 degrees of arc on the dorsal marginal zone.

The protein localises to the nucleus. Its function is as follows. Plays a central role in executing Spemann's organizer phenomenon (the dorsal blastopore lip of the early Xenopus laevis gastrula can organize a complete secondary body axis when transplanted to another embryo). The protein is Homeobox protein goosecoid isoform A (gsc-a) of Xenopus laevis (African clawed frog).